A 180-amino-acid chain; its full sequence is Outer-membrane lipoprotein LolB (180 aa).

Positions 1-16 (MIRRVLLLSLALLLAG) are cleaved as a signal peptide. Residue cysteine 17 is the site of N-palmitoyl cysteine attachment. Residue cysteine 17 is the site of S-diacylglycerol cysteine attachment.

It belongs to the LolB family. In terms of assembly, monomer.

The protein localises to the cell outer membrane. Functionally, plays a critical role in the incorporation of lipoproteins in the outer membrane after they are released by the LolA protein. The polypeptide is Outer-membrane lipoprotein LolB (Chromobacterium violaceum (strain ATCC 12472 / DSM 30191 / JCM 1249 / CCUG 213 / NBRC 12614 / NCIMB 9131 / NCTC 9757 / MK)).